We begin with the raw amino-acid sequence, 269 residues long: Phosphatidylglycerol--prolipoprotein diacylglyceryl transferase (269 aa).

Transmembrane regions (helical) follow at residues 17–37 (IGPIAIRWYALAYIAGLMLGW), 59–79 (FLVWATMGVVLGGRLGYVLFY), 95–115 (WQGGMSFHGGALGVIVGIIAF), 123–143 (LFQVGDVICCAVPIGLFFGRI), 181–201 (AGLEGAVLFLVLFGLWRLTGI), 206–226 (GALSGVFLAGYGLARIASEFF), and 242–262 (MGQLLSIPQVLVGLALLAWAL). An a 1,2-diacyl-sn-glycero-3-phospho-(1'-sn-glycerol)-binding site is contributed by Arg-142.

The protein belongs to the Lgt family.

The protein resides in the cell inner membrane. The catalysed reaction is L-cysteinyl-[prolipoprotein] + a 1,2-diacyl-sn-glycero-3-phospho-(1'-sn-glycerol) = an S-1,2-diacyl-sn-glyceryl-L-cysteinyl-[prolipoprotein] + sn-glycerol 1-phosphate + H(+). The protein operates within protein modification; lipoprotein biosynthesis (diacylglyceryl transfer). Functionally, catalyzes the transfer of the diacylglyceryl group from phosphatidylglycerol to the sulfhydryl group of the N-terminal cysteine of a prolipoprotein, the first step in the formation of mature lipoproteins. This is Phosphatidylglycerol--prolipoprotein diacylglyceryl transferase from Paramagnetospirillum magneticum (strain ATCC 700264 / AMB-1) (Magnetospirillum magneticum).